We begin with the raw amino-acid sequence, 448 residues long: Immunoglobulin G-binding protein G (448 aa).

An N-terminal signal peptide occupies residues 1–33 (MEKEKKVKYFLRKSAFGLASVSAAFLVGSTVFA). 4 tandem repeats follow at residues 104–140 (LAKAKADALKEFNKYGVSDYYKNLINNAKTVEGIKDL), 179–215 (LAEAKVLANRELDKYGVSDYHKNLINNAKTVEGVKEL), 228–282 (TYKL…TVTE), and 298–352 (TYKL…TVTE). The 2 X 37 AA repeats stretch occupies residues 104 to 215 (LAKAKADALK…AKTVEGVKEL (112 aa)). Positions 228-352 (TYKLILNGKT…DATKTFTVTE (125 aa)) are 2 X 55 AA repeats. Positions 358 to 422 (PGDAPTEPEK…TLPTTGEGSN (65 aa)) are disordered. The span at 384–412 (AKDDAKKDDTKKEDAKKPEAKKDDAKKAE) shows a compositional bias: basic and acidic residues. Positions 386 to 410 (DDAKKDDTKKEDAKKPEAKKDDAKK) are 5 X 5 AA repeats of [DE]-D-A-K-K. The short motif at 414-418 (LPTTG) is the LPXTG sorting signal element. Thr-417 bears the Pentaglycyl murein peptidoglycan amidated threonine mark. Positions 418 to 448 (GEGSNPFFTAAALAVMAGAGALAVASKRKED) are cleaved as a propeptide — removed by sortase.

It localises to the secreted. It is found in the cell wall. Functionally, binds to the constant Fc region of IgG with high affinity. The protein is Immunoglobulin G-binding protein G (spg) of Streptococcus sp. group G.